The sequence spans 504 residues: Activin receptor type-1 (504 aa).

The N-terminal stretch at 1 to 16 (MALPVLLLLLALPSRS) is a signal peptide. At 17–119 (VQDEELKLNE…EAAGYSMETL (103 aa)) the chain is on the extracellular side. Residue asparagine 94 is glycosylated (N-linked (GlcNAc...) asparagine). The helical transmembrane segment at 120–140 (IIVILAPVVVLVIFSVVAVLI) threads the bilayer. Topologically, residues 141 to 504 (IRRIQKNHME…NSLDKLKADC (364 aa)) are cytoplasmic. The GS domain occupies 173–202 (STLADLLDHSCTSGSGSGLPFLVQRTVARQ). The 295-residue stretch at 203-497 (ITLVECVGKG…KTLTKIDNSL (295 aa)) folds into the Protein kinase domain. Residues 209-217 (VGKGRYGEV) and lysine 230 each bind ATP. Aspartate 331 (proton acceptor) is an active-site residue.

Belongs to the protein kinase superfamily. TKL Ser/Thr protein kinase family. TGFB receptor subfamily. Requires Mg(2+) as cofactor. The cofactor is Mn(2+).

It is found in the membrane. It carries out the reaction L-threonyl-[receptor-protein] + ATP = O-phospho-L-threonyl-[receptor-protein] + ADP + H(+). The enzyme catalyses L-seryl-[receptor-protein] + ATP = O-phospho-L-seryl-[receptor-protein] + ADP + H(+). Functionally, on ligand binding, forms a receptor complex consisting of two type II and two type I transmembrane serine/threonine kinases. Type II receptors phosphorylate and activate type I receptors which autophosphorylate, then bind and activate SMAD transcriptional regulators. Receptor for activin. This Gallus gallus (Chicken) protein is Activin receptor type-1 (ACVR1).